The chain runs to 213 residues: Major fimbrial subunit (213 aa).

The first 20 residues, 1–20, serve as a signal peptide directing secretion; that stretch reads MKKTLLGSLILLAFAGNVQA. C41 and C81 are oxidised to a cystine.

The protein belongs to the fimbrial protein family.

The protein localises to the fimbrium. Functionally, mediates adherence to oropharyngeal epithelial cells. Helps the airway colonization process. This Haemophilus influenzae protein is Major fimbrial subunit (hifA).